We begin with the raw amino-acid sequence, 573 residues long: Eukaryotic translation initiation factor 3 subunit D (573 aa).

The segment at 111-162 is disordered; sequence VFTRGGRGQRGARGTERGGRAQLSRGRGGQYGGGYDRGGRSAAGGRGGRRFG. Gly residues predominate over residues 136–156; that stretch reads GRGGQYGGGYDRGGRSAAGGR. An RNA gate region spans residues 301 to 315; sequence ALDMVTVNENAVDAP. Residues 552 to 573 form a disordered region; sequence PAGGLDEEEDNGDLGQEEDDEE. The segment covering 556–573 has biased composition (acidic residues); sequence LDEEEDNGDLGQEEDDEE.

This sequence belongs to the eIF-3 subunit D family. In terms of assembly, component of the eukaryotic translation initiation factor 3 (eIF-3) complex.

The protein localises to the cytoplasm. Its function is as follows. mRNA cap-binding component of the eukaryotic translation initiation factor 3 (eIF-3) complex, which is involved in protein synthesis of a specialized repertoire of mRNAs and, together with other initiation factors, stimulates binding of mRNA and methionyl-tRNAi to the 40S ribosome. The eIF-3 complex specifically targets and initiates translation of a subset of mRNAs involved in cell proliferation. In the eIF-3 complex, eif3d specifically recognizes and binds the 7-methylguanosine cap of a subset of mRNAs. The polypeptide is Eukaryotic translation initiation factor 3 subunit D (Pyricularia oryzae (strain 70-15 / ATCC MYA-4617 / FGSC 8958) (Rice blast fungus)).